Consider the following 434-residue polypeptide: Chaperone SurA (434 aa).

The N-terminal stretch at 1-22 is a signal peptide; it reads MKPSKHLIFALFALAISQPTMA. PpiC domains follow at residues 173 to 274 and 283 to 383; these read DVEY…KIMD and IEEV…QLEE.

It localises to the periplasm. It carries out the reaction [protein]-peptidylproline (omega=180) = [protein]-peptidylproline (omega=0). Functionally, chaperone involved in the correct folding and assembly of outer membrane proteins. Recognizes specific patterns of aromatic residues and the orientation of their side chains, which are found more frequently in integral outer membrane proteins. May act in both early periplasmic and late outer membrane-associated steps of protein maturation. This Shewanella sp. (strain MR-4) protein is Chaperone SurA.